Here is a 447-residue protein sequence, read N- to C-terminus: Serine/threonine-protein phosphatase 2A 55 kDa regulatory subunit B gamma isoform (447 aa).

7 WD repeats span residues 22–61 (TEAD…KNAP), 87–128 (EIEE…KRPE), 171–209 (GHTY…RSFN), 220–260 (DLTE…LCDK), 279–317 (EIIS…RPIE), 334–375 (ENDC…DVTL), and 410–446 (DFTK…NSDV).

It belongs to the phosphatase 2A regulatory subunit B family. PP2A consists of a common heterodimeric core enzyme, composed of a 36 kDa catalytic subunit (subunit C) and a 65 kDa constant regulatory subunit (PR65 or subunit A), that associates with a variety of regulatory subunits. Proteins that associate with the core dimer include three families of regulatory subunits B (the R2/B/PR55/B55, R3/B''/PR72/PR130/PR59 and R5/B'/B56 families), the 48 kDa variable regulatory subunit, viral proteins, and cell signaling molecules. Interacts with IER5. As to expression, highly expressed in brain.

In terms of biological role, the B regulatory subunit might modulate substrate selectivity and catalytic activity, and might also direct the localization of the catalytic enzyme to a particular subcellular compartment. This Oryctolagus cuniculus (Rabbit) protein is Serine/threonine-protein phosphatase 2A 55 kDa regulatory subunit B gamma isoform (PPP2R2C).